Here is a 1157-residue protein sequence, read N- to C-terminus: ATP-dependent helicase/deoxyribonuclease subunit B (1157 aa).

The region spanning 1-299 is the UvrD-like helicase ATP-binding domain; that stretch reads MSIRFIIGRA…SHLEKYFFVR (299 aa). Residue 8–15 participates in ATP binding; it reads GRAGAGKT. Residues 279-590 enclose the UvrD-like helicase C-terminal domain; the sequence is GNTARFKSPA…LVASLERSRN (312 aa). The [4Fe-4S] cluster site is built by C792, C1112, C1115, and C1121.

The protein belongs to the helicase family. AddB/RexB type 1 subfamily. As to quaternary structure, heterodimer of AddA and AddB. Requires Mg(2+) as cofactor. [4Fe-4S] cluster serves as cofactor.

Functionally, the heterodimer acts as both an ATP-dependent DNA helicase and an ATP-dependent, dual-direction single-stranded exonuclease. Recognizes the chi site generating a DNA molecule suitable for the initiation of homologous recombination. The AddB subunit has 5' -&gt; 3' nuclease activity but not helicase activity. The chain is ATP-dependent helicase/deoxyribonuclease subunit B from Pelotomaculum thermopropionicum (strain DSM 13744 / JCM 10971 / SI).